The following is a 151-amino-acid chain: Small ribosomal subunit protein uS19 (151 aa).

A2 is subject to N-acetylalanine.

It belongs to the universal ribosomal protein uS19 family.

Functionally, negatively regulates lifespan. In Caenorhabditis elegans, this protein is Small ribosomal subunit protein uS19.